The sequence spans 227 residues: Putative ankyrin repeat protein L45 (227 aa).

6 ANK repeats span residues 38–66 (FETNIIEYVVENNLLDILRHIIFLKNINH), 78–107 (CLEESLNASCKNGKLEIVKLLVDLGANIFH), 108–137 (NENCAMMLASEYGHIEIVEYLVSKGSDVRA), 139–167 (NDYAVIYASKNGHLEIVKYLVSQGCDVRS), 168–197 (CDSYAVRLASEYGHLEIVKFLVKKGANYRA), and 199–227 (NHHAVIEASKNKHYEIVEFLMNYSTGITK).

The sequence is that of Putative ankyrin repeat protein L45 from Acanthamoeba polyphaga mimivirus (APMV).